Consider the following 461-residue polypeptide: tRNA modification GTPase MnmE (461 aa).

Residues Arg22, Glu87, and Arg126 each coordinate (6S)-5-formyl-5,6,7,8-tetrahydrofolate. One can recognise a TrmE-type G domain in the interval 222–382; the sequence is GLKTVIVGKP…LEETIFNMVV (161 aa). Residue Asn232 participates in K(+) binding. GTP-binding positions include 232–237, 251–257, and 276–279; these read NVGKSS, TDIPGTT, and DTAG. Ser236 contributes to the Mg(2+) binding site. Residues Thr251, Ile253, and Thr256 each contribute to the K(+) site. A Mg(2+)-binding site is contributed by Thr257. Lys461 provides a ligand contact to (6S)-5-formyl-5,6,7,8-tetrahydrofolate.

The protein belongs to the TRAFAC class TrmE-Era-EngA-EngB-Septin-like GTPase superfamily. TrmE GTPase family. In terms of assembly, homodimer. Heterotetramer of two MnmE and two MnmG subunits. K(+) is required as a cofactor.

The protein localises to the cytoplasm. Exhibits a very high intrinsic GTPase hydrolysis rate. Involved in the addition of a carboxymethylaminomethyl (cmnm) group at the wobble position (U34) of certain tRNAs, forming tRNA-cmnm(5)s(2)U34. The chain is tRNA modification GTPase MnmE from Desulforamulus reducens (strain ATCC BAA-1160 / DSM 100696 / MI-1) (Desulfotomaculum reducens).